Reading from the N-terminus, the 92-residue chain is Protein 10 (92 aa).

The EF-hand domain maps to 18 to 29 (FMQKYDKNSDQH).

This sequence belongs to the calbindin family. In terms of tissue distribution, brain.

This Cavia porcellus (Guinea pig) protein is Protein 10.